The primary structure comprises 738 residues: Vesicle-fusing ATPase (738 aa).

ATP is bound by residues 507 to 512 and 547 to 554; these read NGIINY and PGCGKSSL.

This sequence belongs to the AAA ATPase family. As to quaternary structure, interacts with syn7A, snpA and snpC. Requires Mg(2+) as cofactor.

The protein localises to the cytoplasmic vesicle membrane. The protein resides in the endosome membrane. The enzyme catalyses ATP + H2O = ADP + phosphate + H(+). Required for vesicle-mediated transport. Involved in endocytosis and endosome-endosome fusion. May be required for transport from the endoplasmic reticulum to the Golgi stack, and for the fusion of transport vesicles within the Golgi cisternae. Required for cell polarity, locomotion and chemotaxis. This is Vesicle-fusing ATPase (nsfA) from Dictyostelium discoideum (Social amoeba).